The primary structure comprises 350 residues: Holliday junction branch migration complex subunit RuvB (350 aa).

Residues Met-1–Asp-20 form a disordered region. The interval Ala-4–Tyr-184 is large ATPase domain (RuvB-L). ATP is bound by residues Ile-23, Arg-24, Gly-65, Lys-68, Thr-69, Thr-70, Glu-131–Phe-133, Arg-174, Tyr-184, and Arg-221. Residue Thr-69 participates in Mg(2+) binding. The tract at residues Gly-185–Asp-255 is small ATPAse domain (RuvB-S). The segment at Glu-258–Glu-350 is head domain (RuvB-H). Residues Arg-294, Arg-313, and Arg-318 each contribute to the DNA site.

Belongs to the RuvB family. As to quaternary structure, homohexamer. Forms an RuvA(8)-RuvB(12)-Holliday junction (HJ) complex. HJ DNA is sandwiched between 2 RuvA tetramers; dsDNA enters through RuvA and exits via RuvB. An RuvB hexamer assembles on each DNA strand where it exits the tetramer. Each RuvB hexamer is contacted by two RuvA subunits (via domain III) on 2 adjacent RuvB subunits; this complex drives branch migration. In the full resolvosome a probable DNA-RuvA(4)-RuvB(12)-RuvC(2) complex forms which resolves the HJ.

It localises to the cytoplasm. It catalyses the reaction ATP + H2O = ADP + phosphate + H(+). The RuvA-RuvB-RuvC complex processes Holliday junction (HJ) DNA during genetic recombination and DNA repair, while the RuvA-RuvB complex plays an important role in the rescue of blocked DNA replication forks via replication fork reversal (RFR). RuvA specifically binds to HJ cruciform DNA, conferring on it an open structure. The RuvB hexamer acts as an ATP-dependent pump, pulling dsDNA into and through the RuvAB complex. RuvB forms 2 homohexamers on either side of HJ DNA bound by 1 or 2 RuvA tetramers; 4 subunits per hexamer contact DNA at a time. Coordinated motions by a converter formed by DNA-disengaged RuvB subunits stimulates ATP hydrolysis and nucleotide exchange. Immobilization of the converter enables RuvB to convert the ATP-contained energy into a lever motion, pulling 2 nucleotides of DNA out of the RuvA tetramer per ATP hydrolyzed, thus driving DNA branch migration. The RuvB motors rotate together with the DNA substrate, which together with the progressing nucleotide cycle form the mechanistic basis for DNA recombination by continuous HJ branch migration. Branch migration allows RuvC to scan DNA until it finds its consensus sequence, where it cleaves and resolves cruciform DNA. This chain is Holliday junction branch migration complex subunit RuvB, found in Ectopseudomonas mendocina (strain ymp) (Pseudomonas mendocina).